Reading from the N-terminus, the 407-residue chain is Bifunctional enzyme IspD/IspF (407 aa).

The tract at residues 1-247 (MVHIQADGAR…RLSHNALPDV (247 aa)) is 2-C-methyl-D-erythritol 4-phosphate cytidylyltransferase. The tract at residues 248–407 (RTGNGYDVHQ…ATVVFQGKPQ (160 aa)) is 2-C-methyl-D-erythritol 2,4-cyclodiphosphate synthase. A divalent metal cation is bound by residues Asp-254 and His-256. Residues 254-256 (DVH) and 280-281 (HS) contribute to the 4-CDP-2-C-methyl-D-erythritol 2-phosphate site. His-288 serves as a coordination point for a divalent metal cation. Residues 302 to 304 (DIG), 378 to 381 (TTNE), Phe-385, and Arg-388 each bind 4-CDP-2-C-methyl-D-erythritol 2-phosphate.

This sequence in the N-terminal section; belongs to the IspD/TarI cytidylyltransferase family. IspD subfamily. In the C-terminal section; belongs to the IspF family. A divalent metal cation serves as cofactor.

The enzyme catalyses 2-C-methyl-D-erythritol 4-phosphate + CTP + H(+) = 4-CDP-2-C-methyl-D-erythritol + diphosphate. The catalysed reaction is 4-CDP-2-C-methyl-D-erythritol 2-phosphate = 2-C-methyl-D-erythritol 2,4-cyclic diphosphate + CMP. Its pathway is isoprenoid biosynthesis; isopentenyl diphosphate biosynthesis via DXP pathway; isopentenyl diphosphate from 1-deoxy-D-xylulose 5-phosphate: step 2/6. The protein operates within isoprenoid biosynthesis; isopentenyl diphosphate biosynthesis via DXP pathway; isopentenyl diphosphate from 1-deoxy-D-xylulose 5-phosphate: step 4/6. Bifunctional enzyme that catalyzes the formation of 4-diphosphocytidyl-2-C-methyl-D-erythritol from CTP and 2-C-methyl-D-erythritol 4-phosphate (MEP) (IspD), and catalyzes the conversion of 4-diphosphocytidyl-2-C-methyl-D-erythritol 2-phosphate (CDP-ME2P) to 2-C-methyl-D-erythritol 2,4-cyclodiphosphate (ME-CPP) with a corresponding release of cytidine 5-monophosphate (CMP) (IspF). The polypeptide is Bifunctional enzyme IspD/IspF (Allorhizobium ampelinum (strain ATCC BAA-846 / DSM 112012 / S4) (Agrobacterium vitis (strain S4))).